The sequence spans 431 residues: Enolase (431 aa).

Glutamine 166 contributes to the (2R)-2-phosphoglycerate binding site. Glutamate 208 acts as the Proton donor in catalysis. Aspartate 245, glutamate 288, and aspartate 315 together coordinate Mg(2+). 4 residues coordinate (2R)-2-phosphoglycerate: lysine 340, arginine 369, serine 370, and lysine 391. Lysine 340 (proton acceptor) is an active-site residue.

Belongs to the enolase family. Mg(2+) is required as a cofactor.

The protein resides in the cytoplasm. It localises to the secreted. It is found in the cell surface. It catalyses the reaction (2R)-2-phosphoglycerate = phosphoenolpyruvate + H2O. It participates in carbohydrate degradation; glycolysis; pyruvate from D-glyceraldehyde 3-phosphate: step 4/5. Functionally, catalyzes the reversible conversion of 2-phosphoglycerate (2-PG) into phosphoenolpyruvate (PEP). It is essential for the degradation of carbohydrates via glycolysis. The sequence is that of Enolase from Clostridium tetani (strain Massachusetts / E88).